A 248-amino-acid polypeptide reads, in one-letter code: Transcription factor bHLH35 (248 aa).

Low complexity predominate over residues 37-54; it reads SGSYDSSSPDGAASSPAS. The tract at residues 37–60 is disordered; it reads SGSYDSSSPDGAASSPASKNIVSE. The region spanning 51-100 is the bHLH domain; that stretch reads SPASKNIVSERNRRQKLNQRLFALRSVVPNITKMDKASIIKDAISYIEGL.

In terms of assembly, homodimer. As to expression, expressed constitutively in roots, leaves, stems, and flowers.

The protein localises to the nucleus. The protein is Transcription factor bHLH35 (BHLH35) of Arabidopsis thaliana (Mouse-ear cress).